Here is a 184-residue protein sequence, read N- to C-terminus: TATA-box-binding protein (184 aa).

2 tandem repeats follow at residues 9–85 (IENI…IDKL) and 100–178 (VQNI…KKEL).

This sequence belongs to the TBP family.

In terms of biological role, general factor that plays a role in the activation of archaeal genes transcribed by RNA polymerase. Binds specifically to the TATA box promoter element which lies close to the position of transcription initiation. The sequence is that of TATA-box-binding protein from Thermoplasma volcanium (strain ATCC 51530 / DSM 4299 / JCM 9571 / NBRC 15438 / GSS1).